Reading from the N-terminus, the 1107-residue chain is Unconventional myosin-Ie (1107 aa).

A Myosin motor domain is found at 19–692; the sequence is SGVDDMVLLS…SLFLLEEMRE (674 aa). Residue 112-119 participates in ATP binding; the sequence is GESGAGKT. Positions 581 to 591 are actin-binding; it reads PHYIRCIKPNE. In terms of domain architecture, IQ spans 695 to 724; sequence YDGYARVIQKTWRKFVARKKYVQMREEASD. Residues 730–922 form the TH1 domain; it reads KERRRNSINR…NKVLQVSIGP (193 aa). The interval 919-1052 is disordered; that stretch reads SIGPGLPKNS…KPQPKPKPQV (134 aa). 2 stretches are compositionally biased toward polar residues: residues 979–989 and 998–1012; these read NQRSNQKSLYT and RQQSTGSDRLSQTPE. S1001 is modified (phosphoserine). Positions 1034 to 1051 are enriched in pro residues; sequence RPPPAGGRPKPQPKPKPQ. The SH3 domain maps to 1050 to 1107; the sequence is PQVPQCKALYAYDAQDTDELSFNANDIIDIIKEDPSGWWTGRLRGKQGLFPNNYVTKI.

The protein belongs to the TRAFAC class myosin-kinesin ATPase superfamily. Myosin family. Interacts with CALM and F-actin. Interacts (via SH3 domain) with SYNJ1, DNM1 and DNM2. Interacts with ARL14EP. Interacts with CARMIL1. As to expression, detected in kidney glomeruli (at protein level). Detected in utricle.

Its subcellular location is the cytoplasm. The protein localises to the cell junction. The protein resides in the cytoplasmic vesicle. It is found in the clathrin-coated vesicle. It localises to the cytoskeleton. In terms of biological role, myosins are actin-based motor molecules with ATPase activity. Unconventional myosins serve in intracellular movements. Their highly divergent tails bind to membranous compartments, which are then moved relative to actin filaments. Binds to membranes containing anionic phospholipids via its tail domain. Involved in clathrin-mediated endocytosis and intracellular movement of clathrin-coated vesicles. Required for normal morphology of the glomerular basement membrane, normal development of foot processes by kidney podocytes and normal kidney function. In dendritic cells, may control the movement of class II-containing cytoplasmic vesicles along the actin cytoskeleton by connecting them with the actin network via ARL14EP and ARL14. The protein is Unconventional myosin-Ie (Myo1e) of Mus musculus (Mouse).